The sequence spans 368 residues: RNA polymerase sigma factor SigA (368 aa).

Residues 71 to 83 (NEKDSSDTDDKIN) are compositionally biased toward basic and acidic residues. Positions 71–90 (NEKDSSDTDDKINPNDLSAP) are disordered. A sigma-70 factor domain-2 region spans residues 135-205 (LAEANLRLVV…TRAIADQART (71 aa)). The Interaction with polymerase core subunit RpoC motif lies at 159–162 (DLIQ). Residues 214 to 290 (ETINKLIRVQ…DQEAQSPSDH (77 aa)) are sigma-70 factor domain-3. Residues 303-356 (VLDTLTDREENVLRLRFGLDDGRTRTLEEVGKVFGVTRERIRQIEAKALRKLRH) form a sigma-70 factor domain-4 region. The segment at residues 329–348 (LEEVGKVFGVTRERIRQIEA) is a DNA-binding region (H-T-H motif).

Belongs to the sigma-70 factor family. RpoD/SigA subfamily. In terms of assembly, interacts transiently with the RNA polymerase catalytic core.

The protein localises to the cytoplasm. Sigma factors are initiation factors that promote the attachment of RNA polymerase to specific initiation sites and are then released. This sigma factor is the primary sigma factor during exponential growth. This chain is RNA polymerase sigma factor SigA, found in Staphylococcus epidermidis (strain ATCC 35984 / DSM 28319 / BCRC 17069 / CCUG 31568 / BM 3577 / RP62A).